A 150-amino-acid chain; its full sequence is Nitric oxide reductase subunit C (150 aa).

The chain crosses the membrane as a helical; Signal-anchor span at residues V13–T29. Heme c contacts are provided by C62, C65, and H66.

As to quaternary structure, heterodimer of cytochromes b (large subunit) and c (small subunit).

It localises to the cell membrane. In terms of biological role, component of the anaerobic respiratory chain that transforms nitrate to dinitrogen (denitrification). The sequence is that of Nitric oxide reductase subunit C (norC) from Paracoccus denitrificans.